Reading from the N-terminus, the 361-residue chain is Adenosine kinase (361 aa).

The Nuclear localization signal signature appears at 7–15 (PKPKKLKVE). Asp34 is a binding site for adenosine. Ser48 lines the Mg(2+) pocket. Residue Tyr76 is modified to Phosphotyrosine. Asn147 contributes to the Mg(2+) binding site. Residue Gln305 coordinates adenosine. Asp316 is a catalytic residue. Asp316 acts as the Proton acceptor in catalysis.

This sequence belongs to the carbohydrate kinase PfkB family. As to quaternary structure, monomer. It depends on Mg(2+) as a cofactor.

Its subcellular location is the nucleus. The enzyme catalyses adenosine + ATP = AMP + ADP + H(+). It participates in purine metabolism; AMP biosynthesis via salvage pathway; AMP from adenosine: step 1/1. Catalyzes the phosphorylation of the purine nucleoside adenosine at the 5' position in an ATP-dependent manner. Serves as a potential regulator of concentrations of extracellular adenosine and intracellular adenine nucleotides. The polypeptide is Adenosine kinase (Adk) (Rattus norvegicus (Rat)).